The sequence spans 66 residues: UPF0370 protein YpfN (66 aa).

The chain crosses the membrane as a helical span at residues 4–24 (LAKYWWILVLVFLVGVLLNVI). The interval 39 to 66 (KPELPPHRDFNDKWDDEDDWPKKDQPKK) is disordered. A compositionally biased stretch (basic and acidic residues) spans 42–51 (LPPHRDFNDK).

Belongs to the UPF0370 family.

The protein localises to the cell membrane. The protein is UPF0370 protein YpfN of Salmonella paratyphi C (strain RKS4594).